The sequence spans 228 residues: Octanoyltransferase (228 aa).

The region spanning 30-213 (NKVEDIMLLL…YFSRVFDFEP (184 aa)) is the BPL/LPL catalytic domain. Substrate is bound by residues 75 to 82 (RGGDVTYH), 143 to 145 (AIG), and 156 to 158 (GFA). The active-site Acyl-thioester intermediate is the Cys174.

Belongs to the LipB family.

It is found in the cytoplasm. The enzyme catalyses octanoyl-[ACP] + L-lysyl-[protein] = N(6)-octanoyl-L-lysyl-[protein] + holo-[ACP] + H(+). It functions in the pathway protein modification; protein lipoylation via endogenous pathway; protein N(6)-(lipoyl)lysine from octanoyl-[acyl-carrier-protein]: step 1/2. Functionally, catalyzes the transfer of endogenously produced octanoic acid from octanoyl-acyl-carrier-protein onto the lipoyl domains of lipoate-dependent enzymes. Lipoyl-ACP can also act as a substrate although octanoyl-ACP is likely to be the physiological substrate. The chain is Octanoyltransferase from Desulforamulus reducens (strain ATCC BAA-1160 / DSM 100696 / MI-1) (Desulfotomaculum reducens).